Consider the following 242-residue polypeptide: Biosynthetic peptidoglycan transglycosylase (242 aa).

Residues 19-39 (LMVVLAVFWGGGIALFSVAPV) form a helical membrane-spanning segment.

The protein belongs to the glycosyltransferase 51 family.

It localises to the cell inner membrane. The enzyme catalyses [GlcNAc-(1-&gt;4)-Mur2Ac(oyl-L-Ala-gamma-D-Glu-L-Lys-D-Ala-D-Ala)](n)-di-trans,octa-cis-undecaprenyl diphosphate + beta-D-GlcNAc-(1-&gt;4)-Mur2Ac(oyl-L-Ala-gamma-D-Glu-L-Lys-D-Ala-D-Ala)-di-trans,octa-cis-undecaprenyl diphosphate = [GlcNAc-(1-&gt;4)-Mur2Ac(oyl-L-Ala-gamma-D-Glu-L-Lys-D-Ala-D-Ala)](n+1)-di-trans,octa-cis-undecaprenyl diphosphate + di-trans,octa-cis-undecaprenyl diphosphate + H(+). It participates in cell wall biogenesis; peptidoglycan biosynthesis. Its function is as follows. Peptidoglycan polymerase that catalyzes glycan chain elongation from lipid-linked precursors. The sequence is that of Biosynthetic peptidoglycan transglycosylase from Escherichia coli (strain SMS-3-5 / SECEC).